Reading from the N-terminus, the 359-residue chain is 5-amino-6-(D-ribitylamino)uracil--L-tyrosine 4-hydroxyphenyl transferase (359 aa).

In terms of domain architecture, Radical SAM core spans 45 to 282 (VTYVVNANIN…VYAISRIFFK (238 aa)). 3 residues coordinate [4Fe-4S] cluster: Cys-59, Cys-63, and Cys-66.

Belongs to the radical SAM superfamily. CofH family. As to quaternary structure, consists of two subunits, CofG and CofH. [4Fe-4S] cluster is required as a cofactor.

The enzyme catalyses 5-amino-6-(D-ribitylamino)uracil + L-tyrosine + S-adenosyl-L-methionine = 5-amino-5-(4-hydroxybenzyl)-6-(D-ribitylimino)-5,6-dihydrouracil + 2-iminoacetate + 5'-deoxyadenosine + L-methionine + H(+). It participates in cofactor biosynthesis; coenzyme F0 biosynthesis. In terms of biological role, catalyzes the radical-mediated synthesis of 5-amino-5-(4-hydroxybenzyl)-6-(D-ribitylimino)-5,6-dihydrouracil from 5-amino-6-(D-ribitylamino)uracil and L-tyrosine. The sequence is that of 5-amino-6-(D-ribitylamino)uracil--L-tyrosine 4-hydroxyphenyl transferase from Methanococcus maripaludis (strain C7 / ATCC BAA-1331).